Here is an 85-residue protein sequence, read N- to C-terminus: U4-theraphotoxin-Hhn1ab (85 aa).

An N-terminal signal peptide occupies residues 1–22 (MKVTLIAILTCAAVLVLHTTAA). Positions 23–48 (EELEAESQLMEVGMPDTELAAVDEER) are excised as a propeptide. Intrachain disulfides connect C56–C77 and C71–C82.

It belongs to the neurotoxin 12 (Hwtx-2) family. 02 (Hwtx-2) subfamily. In terms of tissue distribution, expressed by the venom gland.

The protein resides in the secreted. In terms of biological role, postsynaptic neurotoxin. The polypeptide is U4-theraphotoxin-Hhn1ab (Cyriopagopus hainanus (Chinese bird spider)).